A 361-amino-acid polypeptide reads, in one-letter code: Caffeic acid 3-O-methyltransferase 1 (361 aa).

128 to 134 (MNQDKVL) contacts substrate. The tract at residues 160–178 (AFEYHGTDPRFNKVFNQGM) is substrate binding. Positions 206, 229, 249, 250, and 263 each coordinate S-adenosyl-L-methionine. His-267 acts as the Proton acceptor in catalysis.

The protein belongs to the class I-like SAM-binding methyltransferase superfamily. Cation-independent O-methyltransferase family. COMT subfamily. In terms of assembly, homodimer.

The catalysed reaction is (E)-caffeate + S-adenosyl-L-methionine = (E)-ferulate + S-adenosyl-L-homocysteine + H(+). It participates in aromatic compound metabolism; phenylpropanoid biosynthesis. Its function is as follows. Catalyzes the conversion of caffeic acid to ferulic acid and of 5-hydroxyferulic acid to sinapic acid. The resulting products may subsequently be converted to the corresponding alcohols that are incorporated into lignins. The chain is Caffeic acid 3-O-methyltransferase 1 (COMT1) from Ocimum basilicum (Sweet basil).